The chain runs to 85 residues: Large ribosomal subunit protein bL27 (85 aa).

Positions 1 to 22 (MAHKKAGGSTNNGRDSESKRLG) are disordered.

Belongs to the bacterial ribosomal protein bL27 family.

The polypeptide is Large ribosomal subunit protein bL27 (Vibrio atlanticus (strain LGP32) (Vibrio splendidus (strain Mel32))).